The chain runs to 1431 residues: MDSDLMDFFDFSKQFSRAPAPKGYITGDPTAFATETIDSKPIKRELIGKDYVHEVVEKEKHLMKKLADGYNTSKNRRTLDELDSDDDEVLMKELPSVRSDEEYYKKYRFDLNRNKNLPIYEQREDILAAIRENPVVILKGETGCGKTTQVPQYILDEAFKRREFCNIVVTQPRRIAAISIANRVCHERKWQPGTVCSYQVGLHRQSNLEDTRLLYCTTGVLLNNLVRVKTLTQYTHIILDEVHERDQDMDFLLLVVRRLLALNSRHVKVILMSATIDTREFSKYFAMSSSLPPVVTASHGRKFPLVKFYRDQLKNIHWKDEPQRTTPGIGPEGYSDAIKLLLVIDNMERKADNQSQQSYEEAKRTGAVLIFLPGIHEIDTMAEHIGRIVDENPNFKISIVRCHSLMSPDSQEEVFLPPPLGHRKVILTTNISESSITVPDVSYVIDFCLTKVLHTDTASNFSSLRLEWASKVNCRQRAGRVGRLRSGRVYRMVTKDFYMNHMNEFGIPEMLRSPLQNSVLKAKELEMGNPSEILALAMSPPNLSDIQNTVLLLKEVGALYTTVDGVYEELDGDLSFWGKIMSKFPLDVRLSRLIILGYVFNCLDEAIVIAAGMTVRSLYVTGSRGQMNEAFWMHYIFADGSGSDMIGIWRVYRIYLNMCQDRMLKESAQQWARRFNVNLRSLKEMHLMVQDLRQRCASLNIQPLPYGACHMWDDREKSIILKVIIAGAFYPNYFMRSNKANADYDRSLFQTICGNDPCRTVYFTNFEPRYMGELYTRRIKELFLEAKIPPENIDVTFQHGSEKVFVTFKPDDEDIDTTKVVQVPGRVMTEVYKAVRMRLENQNRPLRVMDQNSAFKYVEQNRIGVISDCTWVPPSNQWPVELLTLPSVFDKTIFGLITHVANCGKFYFQPQALAERIASMSEIFNRSLELSCYVQNAKAVTKGLQLLAKRGNLYQRAVVLKVETQINGYPRFRVRFIDYGDVAVVPIDKLRLMSPQLKRDFERLPPRMFECRLALVQPSSVASSYNQWPQHANEMLISVAKSGRVELEIYSLVNNVAAVLIHTRGGVLNDMLVDRQLARRADEDYMSRKDHDLRLRKQETKRNVSITDQRLINEEYLRFAQLPKDTDLEPPPLNKCNLSIRLKGPYSPLEASLNSLLRIGMYKSVYIDKESVNSVLLDSDPQDRHDQMVVAASVTEAFDNLTVRGTTLMPNIHGFGALMAMLFCPTMQIKCNKDRTKYVSILAGLGYNPDTMQPHFEEHDMVINLDVAILKDDIRIINQMRYNIDSMFYNFDVNEMPSVGTEDRVVIFNQLRSLLIRLLGKDRSFIERHVSNFEYLWEDMSDLEPPSEPYGKRAIFPMHSSYDFESENMGNLLSLQANCKELYSWRNFEGTMQPMKCRLCNDTLESVAELRLHLLTQLHRDREKQVGWKQN.

A Helicase ATP-binding domain is found at 127–294 (LAAIRENPVV…FAMSSSLPPV (168 aa)). ATP is bound at residue 140–147 (GETGCGKT). The DEAH box signature appears at 240 to 243 (DEVH). One can recognise a Helicase C-terminal domain in the interval 354 to 526 (QSQQSYEEAK…NSVLKAKELE (173 aa)). The Tudor domain maps to 937–1000 (AKAVTKGLQL…RLMSPQLKRD (64 aa)).

It belongs to the DEAD box helicase family. DEAH subfamily.

Its subcellular location is the cytoplasm. The catalysed reaction is ATP + H2O = ADP + phosphate + H(+). Its function is as follows. Probable ATP-binding RNA helicase which plays a central role during spermatogenesis and oogenesis by repressing transposable elements and preventing their mobilization, which is essential for the germline integrity. Acts via the piRNA metabolic process, which mediates the repression of transposable elements during meiosis by forming complexes composed of piRNAs and Piwi and govern the methylation and subsequent repression of transposons. Involved in the repression of LTR retrotransposon copia. Also involved in telomere regulation by repressing specialized telomeric retroelements HeT-A, TAHRE, and TART; Drosophila telomeres being maintained by transposition of specialized telomeric retroelements. Involved in telomeric trans-silencing, a repression mechanism by which a transposon or a transgene inserted in subtelomeric heterochromatin has the capacity to repress in trans in the female germline, a homologous transposon, or transgene located in euchromatin. Involved in the repression of testis-expressed Stellate genes by the homologous Su(Ste) repeats. Required for anteroposterior and dorsoventral axis formation during oogenesis. The chain is Probable ATP-dependent RNA helicase spindle-E (spn-E) from Drosophila mojavensis (Fruit fly).